The chain runs to 350 residues: Holliday junction branch migration complex subunit RuvB (350 aa).

The interval 1-186 (MAGHEEEDER…FGIPLRLDFY (186 aa)) is large ATPase domain (RuvB-L). Residues Leu25, Arg26, Gly67, Lys70, Thr71, Thr72, 133–135 (EDF), Arg176, Tyr186, and Arg223 each bind ATP. Thr71 serves as a coordination point for Mg(2+). The interval 187-257 (ETDELVQIVT…IADAALNRLE (71 aa)) is small ATPAse domain (RuvB-S). Residues 260 to 350 (GRGLDAMDRR…VQPDLWSDAP (91 aa)) are head domain (RuvB-H). The DNA site is built by Arg296, Arg315, and Arg320.

It belongs to the RuvB family. Homohexamer. Forms an RuvA(8)-RuvB(12)-Holliday junction (HJ) complex. HJ DNA is sandwiched between 2 RuvA tetramers; dsDNA enters through RuvA and exits via RuvB. An RuvB hexamer assembles on each DNA strand where it exits the tetramer. Each RuvB hexamer is contacted by two RuvA subunits (via domain III) on 2 adjacent RuvB subunits; this complex drives branch migration. In the full resolvosome a probable DNA-RuvA(4)-RuvB(12)-RuvC(2) complex forms which resolves the HJ.

It is found in the cytoplasm. It catalyses the reaction ATP + H2O = ADP + phosphate + H(+). Its function is as follows. The RuvA-RuvB-RuvC complex processes Holliday junction (HJ) DNA during genetic recombination and DNA repair, while the RuvA-RuvB complex plays an important role in the rescue of blocked DNA replication forks via replication fork reversal (RFR). RuvA specifically binds to HJ cruciform DNA, conferring on it an open structure. The RuvB hexamer acts as an ATP-dependent pump, pulling dsDNA into and through the RuvAB complex. RuvB forms 2 homohexamers on either side of HJ DNA bound by 1 or 2 RuvA tetramers; 4 subunits per hexamer contact DNA at a time. Coordinated motions by a converter formed by DNA-disengaged RuvB subunits stimulates ATP hydrolysis and nucleotide exchange. Immobilization of the converter enables RuvB to convert the ATP-contained energy into a lever motion, pulling 2 nucleotides of DNA out of the RuvA tetramer per ATP hydrolyzed, thus driving DNA branch migration. The RuvB motors rotate together with the DNA substrate, which together with the progressing nucleotide cycle form the mechanistic basis for DNA recombination by continuous HJ branch migration. Branch migration allows RuvC to scan DNA until it finds its consensus sequence, where it cleaves and resolves cruciform DNA. The chain is Holliday junction branch migration complex subunit RuvB from Rhodospirillum rubrum (strain ATCC 11170 / ATH 1.1.1 / DSM 467 / LMG 4362 / NCIMB 8255 / S1).